Consider the following 322-residue polypeptide: Fructose-1,6-bisphosphatase class 1 (322 aa).

Mg(2+) is bound by residues glutamate 84, aspartate 103, leucine 105, and aspartate 106. Residues 106–109 (DGSS), asparagine 198, and lysine 264 contribute to the substrate site. Position 270 (glutamate 270) interacts with Mg(2+).

This sequence belongs to the FBPase class 1 family. Homotetramer. Requires Mg(2+) as cofactor.

The protein resides in the cytoplasm. It catalyses the reaction beta-D-fructose 1,6-bisphosphate + H2O = beta-D-fructose 6-phosphate + phosphate. It participates in carbohydrate biosynthesis; gluconeogenesis. The protein is Fructose-1,6-bisphosphatase class 1 of Colwellia psychrerythraea (strain 34H / ATCC BAA-681) (Vibrio psychroerythus).